A 157-amino-acid chain; its full sequence is Beta-defensin 125 (157 aa).

The signal sequence occupies residues 1–20 (MNLLMLTFIICGLLTQVTKG). 3 cysteine pairs are disulfide-bonded: cysteine 27–cysteine 55, cysteine 35–cysteine 49, and cysteine 39–cysteine 56. The interval 109 to 157 (GETITPETNTPETTMPPSETTSSKTTMPPSETATSETMPPPSQTALTHN) is disordered. Positions 110–140 (ETITPETNTPETTMPPSETTSSKTTMPPSET) are enriched in low complexity. Polar residues predominate over residues 141-157 (ATSETMPPPSQTALTHN).

The protein belongs to the beta-defensin family.

The protein localises to the secreted. Functionally, has antibacterial activity. The polypeptide is Beta-defensin 125 (DEFB125) (Pongo pygmaeus (Bornean orangutan)).